The following is a 114-amino-acid chain: Evasin P1096 (114 aa).

A signal peptide spans 1–23 (MELNAFTILHIAVFIAVGYYANT). Intrachain disulfides connect Cys47/Cys65, Cys51/Cys67, and Cys61/Cys78. The N-linked (GlcNAc...) asparagine glycan is linked to Asn50. The interval 89–114 (DPSQDPSIDEAAPRESVSKRRSNGES) is disordered. Positions 99-114 (AAPRESVSKRRSNGES) are enriched in basic and acidic residues.

The protein resides in the secreted. Its function is as follows. Salivary chemokine-binding protein which binds to host chemokine CXCL8. The sequence is that of Evasin P1096 from Ixodes ricinus (Common tick).